The chain runs to 372 residues: Ligninase A (372 aa).

Residues 1–21 (MAFKQLVAAISLALSLTTANA) form the signal peptide. A propeptide spanning residues 22–28 (AVVKEKR) is cleaved from the precursor. Cystine bridges form between Cys31–Cys43, Cys42–Cys313, Cys62–Cys148, and Cys277–Cys345. His75 serves as the catalytic Proton acceptor. Residues Asp76, Gly94, Asp96, and Ser98 each coordinate Ca(2+). His204 lines the heme b pocket. Ser205, Asp222, Thr224, Ile227, and Asp229 together coordinate Ca(2+). Asn285 carries N-linked (GlcNAc...) asparagine glycosylation.

Belongs to the peroxidase family. Ligninase subfamily. The cofactor is heme b. Ca(2+) serves as cofactor.

The enzyme catalyses 1-(3,4-dimethoxyphenyl)-2-(2-methoxyphenoxy)propane-1,3-diol + H2O2 = 3,4-dimethoxybenzaldehyde + guaiacol + glycolaldehyde + H2O. The catalysed reaction is 2 (3,4-dimethoxyphenyl)methanol + H2O2 = 2 (3,4-dimethoxyphenyl)methanol radical + 2 H2O. Its pathway is secondary metabolite metabolism; lignin degradation. Depolymerization of lignin. Catalyzes the C(alpha)-C(beta) cleavage of the propyl side chains of lignin. The sequence is that of Ligninase A (LIPA) from Phanerodontia chrysosporium (White-rot fungus).